The chain runs to 99 residues: Ribonuclease P protein component 1 (99 aa).

It belongs to the eukaryotic/archaeal RNase P protein component 1 family. Consists of a catalytic RNA component and at least 4-5 protein subunits.

The protein resides in the cytoplasm. The enzyme catalyses Endonucleolytic cleavage of RNA, removing 5'-extranucleotides from tRNA precursor.. Functionally, part of ribonuclease P, a protein complex that generates mature tRNA molecules by cleaving their 5'-ends. This Methanococcus vannielii protein is Ribonuclease P protein component 1.